The following is a 101-amino-acid chain: Small ribosomal subunit protein uS14 (101 aa).

It belongs to the universal ribosomal protein uS14 family. Part of the 30S ribosomal subunit. Contacts proteins S3 and S10.

Binds 16S rRNA, required for the assembly of 30S particles and may also be responsible for determining the conformation of the 16S rRNA at the A site. The sequence is that of Small ribosomal subunit protein uS14 from Ehrlichia canis (strain Jake).